The primary structure comprises 257 residues: Nopaline permease ATP-binding protein P (257 aa).

Residues 8–253 (LVAEDVHKNF…PTSPRCRAFL (246 aa)) enclose the ABC transporter domain. Residue 40–47 (GSSGSGKS) coordinates ATP.

This sequence belongs to the ABC transporter superfamily.

The protein localises to the cell inner membrane. In terms of biological role, component of the nopaline active transport system probably consisting of four subunits: Q, M, P and T. This system is also capable of transporting octopine provided that catabolic functions are induced with nopaline. The sequence is that of Nopaline permease ATP-binding protein P (nocP) from Agrobacterium fabrum (strain C58 / ATCC 33970) (Agrobacterium tumefaciens (strain C58)).